Here is a 153-residue protein sequence, read N- to C-terminus: Riboflavin synthase (153 aa).

The protein belongs to the DMRL synthase family. Homooligomer. Mg(2+) is required as a cofactor.

The enzyme catalyses 2 6,7-dimethyl-8-(1-D-ribityl)lumazine + H(+) = 5-amino-6-(D-ribitylamino)uracil + riboflavin. It functions in the pathway cofactor biosynthesis; riboflavin biosynthesis; riboflavin from 2-hydroxy-3-oxobutyl phosphate and 5-amino-6-(D-ribitylamino)uracil: step 2/2. Its activity is regulated as follows. Inhibited by EDTA. The polypeptide is Riboflavin synthase (ribC) (Methanothermobacter thermautotrophicus (strain ATCC 29096 / DSM 1053 / JCM 10044 / NBRC 100330 / Delta H) (Methanobacterium thermoautotrophicum)).